The sequence spans 906 residues: Coatomer subunit beta' (906 aa).

WD repeat units lie at residues 13-52 (ARSDRVKSVDLHPTEPWMLASLYNGSVCVWNHETQTLVKT), 55-94 (VCDLPVRAAKFVARKNWVVTGADDMQIRVFNYNTLERVHM), 97-136 (AHSDYIRCIAVHPTQPFILTSSDDMLIKLWDWDKKWSCSQ), 140-180 (GHTH…PNFT), 183-224 (GHEK…CVQT), 227-266 (GHAQNVSCASFHPELPIIITGSEDGTVRIWHSSTYRLEST), 350-388 (SCEIYPQTIQHNPNGRFVVVCGDGEYIIYTAMALRNKSF), and 390-425 (SAQEFAWAHDSSEYAIRESNSIVKIFKNFKEKKSFK). Position 627 is an N6-acetyllysine (Lys-627). A WD 9 repeat occupies 746–783 (IRTGRLPEAAFLARTYLPSQVSRVVKLWRENLSKVNQK). A disordered region spans residues 837-863 (EEAKGFQPSRSTAQQELDGKPASPTPV). A Phosphoserine modification is found at Ser-859. Thr-861 is subject to Phosphothreonine. Residues 866–890 (ASHTANKEEKSLLELEVDLDNLELV) are a coiled coil.

This sequence belongs to the WD repeat COPB2 family. Oligomeric complex that consists of at least the alpha, beta, beta', gamma, delta, epsilon and zeta subunits. Probably interacts with PEX11A. Interacts with SCYL1. Interacts with JAGN1.

The protein resides in the cytoplasm. It localises to the cytosol. Its subcellular location is the golgi apparatus membrane. It is found in the cytoplasmic vesicle. The protein localises to the COPI-coated vesicle membrane. The coatomer is a cytosolic protein complex that binds to dilysine motifs and reversibly associates with Golgi non-clathrin-coated vesicles, which further mediate biosynthetic protein transport from the ER, via the Golgi up to the trans Golgi network. Coatomer complex is required for budding from Golgi membranes, and is essential for the retrograde Golgi-to-ER transport of dilysine-tagged proteins. In mammals, the coatomer can only be recruited by membranes associated to ADP-ribosylation factors (ARFs), which are small GTP-binding proteins; the complex also influences the Golgi structural integrity, as well as the processing, activity, and endocytic recycling of LDL receptors. In terms of biological role, this coatomer complex protein, essential for Golgi budding and vesicular trafficking, is a selective binding protein (RACK) for protein kinase C, epsilon type. It binds to Golgi membranes in a GTP-dependent manner. The sequence is that of Coatomer subunit beta' (COPB2) from Pongo abelii (Sumatran orangutan).